Reading from the N-terminus, the 303-residue chain is UDP-3-O-acyl-N-acetylglucosamine deacetylase (303 aa).

Zn(2+) is bound by residues histidine 78, histidine 237, and aspartate 241. The active-site Proton donor is histidine 264.

It belongs to the LpxC family. Zn(2+) serves as cofactor.

It carries out the reaction a UDP-3-O-[(3R)-3-hydroxyacyl]-N-acetyl-alpha-D-glucosamine + H2O = a UDP-3-O-[(3R)-3-hydroxyacyl]-alpha-D-glucosamine + acetate. The protein operates within glycolipid biosynthesis; lipid IV(A) biosynthesis; lipid IV(A) from (3R)-3-hydroxytetradecanoyl-[acyl-carrier-protein] and UDP-N-acetyl-alpha-D-glucosamine: step 2/6. In terms of biological role, catalyzes the hydrolysis of UDP-3-O-myristoyl-N-acetylglucosamine to form UDP-3-O-myristoylglucosamine and acetate, the committed step in lipid A biosynthesis. This chain is UDP-3-O-acyl-N-acetylglucosamine deacetylase, found in Pseudomonas fluorescens (strain Pf0-1).